A 1038-amino-acid polypeptide reads, in one-letter code: Bone morphogenetic protein receptor type-2 (1038 aa).

The signal sequence occupies residues 1–26 (MTSSLQRPWRVPWLPWTILLVSTAAA). Topologically, residues 27-150 (SQNQERLCAF…PPHSFNRDET (124 aa)) are extracellular. 5 cysteine pairs are disulfide-bonded: Cys-34–Cys-66, Cys-60–Cys-84, Cys-94–Cys-117, Cys-99–Cys-116, and Cys-118–Cys-123. Residue Asn-55 is glycosylated (N-linked (GlcNAc...) asparagine). Residue Asn-110 is glycosylated (N-linked (GlcNAc...) asparagine). Residue Asn-126 is glycosylated (N-linked (GlcNAc...) asparagine). Residues 151–171 (IIIALASVSVLAVLIVALCFG) form a helical membrane-spanning segment. Residues 172 to 1038 (YRMLTGDRKQ…VSKDIGMNCL (867 aa)) lie on the Cytoplasmic side of the membrane. One can recognise a Protein kinase domain in the interval 203–504 (LKLLELIGRG…QCAEERMAEL (302 aa)). ATP is bound by residues 209–217 (IGRGRYGAV), Lys-230, and 280–282 (EYY). Asp-333 serves as the catalytic Proton acceptor. Residues 337 to 338 (RN) and Asp-351 each bind ATP. Thr-379 bears the Phosphothreonine mark. Ser-586 carries the phosphoserine modification. Residues 593–626 (QAQARIPSPETSVTSLSTNTTTTNTTGLTPSTGM) are disordered. Positions 603–626 (TSVTSLSTNTTTTNTTGLTPSTGM) are enriched in low complexity. Residues Ser-680 and Ser-681 each carry the phosphoserine modification. 2 disordered regions span residues 746-770 (PKQQNLPKRPTSLPLNTKNSTKEPR) and 872-972 (RREQ…EKIK). Basic and acidic residues predominate over residues 872 to 896 (RREQQAGHDEGVLDRLVDRRERPLE). Residues 937 to 964 (RPNSLDLSATNVLDGSSIQIGESTQDGK) show a composition bias toward polar residues.

The protein belongs to the protein kinase superfamily. TKL Ser/Thr protein kinase family. TGFB receptor subfamily. As to quaternary structure, interacts with GDF5. Interacts with BMP4. Interacts with SCUBE3. Interacts with TSC22D1/TSC-22. Interacts with activin A/INHBA. The cofactor is Mg(2+). Mn(2+) is required as a cofactor. As to expression, highly expressed in heart and liver.

Its subcellular location is the cell membrane. It carries out the reaction L-threonyl-[receptor-protein] + ATP = O-phospho-L-threonyl-[receptor-protein] + ADP + H(+). It catalyses the reaction L-seryl-[receptor-protein] + ATP = O-phospho-L-seryl-[receptor-protein] + ADP + H(+). Its function is as follows. On ligand binding, forms a receptor complex consisting of two type II and two type I transmembrane serine/threonine kinases. Type II receptors phosphorylate and activate type I receptors which autophosphorylate, then bind and activate SMAD transcriptional regulators. Can also mediate signaling through the activation of the p38MAPK cascade. Binds to BMP7, BMP2 and, less efficiently, BMP4. Binding is weak but enhanced by the presence of type I receptors for BMPs. Mediates induction of adipogenesis by GDF6. Promotes signaling also by binding to activin A/INHBA. The protein is Bone morphogenetic protein receptor type-2 (BMPR2) of Homo sapiens (Human).